The chain runs to 504 residues: Maturase K (504 aa).

This sequence belongs to the intron maturase 2 family. MatK subfamily.

The protein localises to the plastid. The protein resides in the chloroplast. Functionally, usually encoded in the trnK tRNA gene intron. Probably assists in splicing its own and other chloroplast group II introns. This Gossypium barbadense (Sea Island cotton) protein is Maturase K.